The primary structure comprises 652 residues: Acetyl-coenzyme A synthetase (652 aa).

Residues 191-194 (RAGR), T311, and N335 each bind CoA. ATP-binding positions include 387–389 (GEP), 411–416 (DTWWQT), D500, and R515. S523 contacts CoA. An ATP-binding site is contributed by R526. Mg(2+)-binding residues include V537, H539, and I542. R584 is a CoA binding site. The residue at position 609 (K609) is an N6-acetyllysine.

The protein belongs to the ATP-dependent AMP-binding enzyme family. It depends on Mg(2+) as a cofactor. In terms of processing, acetylated. Deacetylation by the SIR2-homolog deacetylase activates the enzyme.

It catalyses the reaction acetate + ATP + CoA = acetyl-CoA + AMP + diphosphate. Functionally, catalyzes the conversion of acetate into acetyl-CoA (AcCoA), an essential intermediate at the junction of anabolic and catabolic pathways. Acs undergoes a two-step reaction. In the first half reaction, Acs combines acetate with ATP to form acetyl-adenylate (AcAMP) intermediate. In the second half reaction, it can then transfer the acetyl group from AcAMP to the sulfhydryl group of CoA, forming the product AcCoA. In terms of biological role, enables the cell to use acetate during aerobic growth to generate energy via the TCA cycle, and biosynthetic compounds via the glyoxylate shunt. Acetylates CheY, the response regulator involved in flagellar movement and chemotaxis. The polypeptide is Acetyl-coenzyme A synthetase (Citrobacter koseri (strain ATCC BAA-895 / CDC 4225-83 / SGSC4696)).